The following is a 123-amino-acid chain: UPF0102 protein Pput_4400 (123 aa).

The protein belongs to the UPF0102 family.

The sequence is that of UPF0102 protein Pput_4400 from Pseudomonas putida (strain ATCC 700007 / DSM 6899 / JCM 31910 / BCRC 17059 / LMG 24140 / F1).